A 166-amino-acid chain; its full sequence is Ribosome maturation factor RimM (166 aa).

The region spanning 90-165 is the PRC barrel domain; sequence NDNDAFSIFY…IITLKNIEGL (76 aa).

It belongs to the RimM family. In terms of assembly, binds ribosomal protein uS19.

It localises to the cytoplasm. An accessory protein needed during the final step in the assembly of 30S ribosomal subunit, possibly for assembly of the head region. Essential for efficient processing of 16S rRNA. May be needed both before and after RbfA during the maturation of 16S rRNA. It has affinity for free ribosomal 30S subunits but not for 70S ribosomes. This chain is Ribosome maturation factor RimM, found in Mesoplasma florum (strain ATCC 33453 / NBRC 100688 / NCTC 11704 / L1) (Acholeplasma florum).